The chain runs to 180 residues: NAD(P)H-quinone oxidoreductase subunit I, chloroplastic (180 aa).

2 consecutive 4Fe-4S ferredoxin-type domains span residues Gly-55 to Arg-84 and Leu-95 to Glu-124. Residues Cys-64, Cys-67, Cys-70, Cys-74, Cys-104, Cys-107, Cys-110, and Cys-114 each contribute to the [4Fe-4S] cluster site.

The protein belongs to the complex I 23 kDa subunit family. In terms of assembly, NDH is composed of at least 16 different subunits, 5 of which are encoded in the nucleus. [4Fe-4S] cluster is required as a cofactor.

It localises to the plastid. The protein resides in the chloroplast thylakoid membrane. The catalysed reaction is a plastoquinone + NADH + (n+1) H(+)(in) = a plastoquinol + NAD(+) + n H(+)(out). It catalyses the reaction a plastoquinone + NADPH + (n+1) H(+)(in) = a plastoquinol + NADP(+) + n H(+)(out). NDH shuttles electrons from NAD(P)H:plastoquinone, via FMN and iron-sulfur (Fe-S) centers, to quinones in the photosynthetic chain and possibly in a chloroplast respiratory chain. The immediate electron acceptor for the enzyme in this species is believed to be plastoquinone. Couples the redox reaction to proton translocation, and thus conserves the redox energy in a proton gradient. The protein is NAD(P)H-quinone oxidoreductase subunit I, chloroplastic of Platanus occidentalis (Sycamore).